A 111-amino-acid chain; its full sequence is Prefoldin subunit 2 (111 aa).

2 coiled-coil regions span residues 1-36 (MEQR…KDEH) and 72-92 (LETK…TLIQ).

It belongs to the prefoldin subunit beta family. In terms of assembly, heterohexamer of two PFD-alpha type and four PFD-beta type subunits.

The protein localises to the cytoplasm. Binds specifically to cytosolic chaperonin (c-CPN) and transfers target proteins to it. Binds to nascent polypeptide chain and promotes folding in an environment in which there are many competing pathways for nonnative proteins. This chain is Prefoldin subunit 2 (GIM4), found in Saccharomyces cerevisiae (strain ATCC 204508 / S288c) (Baker's yeast).